The following is a 3476-amino-acid chain: MANRRVGRGCWEVSPTERRPPAGLRGPATEEEASSPPVLSLSHFCRSPFLCFGDVLLGDSRTLPLALDNPNEEVAEVKISHFPAADLGFSVSQRCFVLQPKEKIVISVNWTPFKEGRVREIMTFLVNDVLKHQAILLGNAEKQKKKKRSLWDTIKKKKISASTSHNRRVSNIQNVNKTFSVSQKVDRVRSPLQACENLAMNEGGPPTENNSLTLEENKIPISPISPAFNECHGATCLPLSVRRSTTYSSLHASENRELLNVDSANVSKVSFNEKAVTETSFNSINVNDQSGENSKLILTPNYSSTLNITQSQINFLSPDSFVNNSHGANNELELVTCLSSDMFMTDNSKPVPLQSTIAHEIYQKILSPDSFIKDNYGLNQDLESESVNPILSPNQFLKDNMAYMCTSQQTYKVPLSNENSQVPQSPQDWSKSEVSPCIPEYQGSKSPKAIFEELVEMKSNYYSFIKQNNPKFSAVQDISSHSHDKQPKRRPILSATVTKRKPTCTRENQTEINKPKAKRCLNSAVGEHEKVIHNQKEKEDFHSYLPVIDPVLSKSKSYKNQIMPSLTTASVARKRKSDGSMEDANVRVAVTEHTEEREIKRIHFSPSEPKTSAVKKTKNVITPISKCISNREKLNLKKKTDLLIFKTPISKTSKRTKPIIAVAQSNLTFIKPLKTDIPRHPMPFAAKNMFYDERWKEKQEQGFTWWLNFILTPDDFTVKTNISEVNAATLLLGVENQHKISVPRAPTKEEMSLRAYTARCRLNRLRRAACRLFTSEKMVKAIKKLEIEIEARRLIVRKDRHLWKDVGERQKVLNWLLSYNPLWLRIGLETIYGELISLEDNSDVTGLAMFILNRLLWNPDIAAEYRHPTVPHLYRDGHEGALSKFTLKKLLLLICFLDYAKISXLIDHDPCLFCKDAEFKASKEILLAFSRDFLSGEGDLSRHLGLLGLPVNHVQTPFDEFDFAITNLAVDLQCGVRLVRTMELLTQNWNLSKKLRIPAISRLQKMHNVDIVLQVLKSRGIELSDEHGNTILSKDIVDRHREKTLRLLWKIAFAFQVDISLNLDQLKEEIAFLKHTKSIKKTISLLSCHSDALINKKKGKRDSGSFEQYSENIKLLMDWVNAVCAFYNKKVENFTVSFSDGRVLCYLIHHYHPCYVPXDAICQRTTQTVECTQTGSVVLNSSSESDDSSLDMSLKAFDHENTSELYKELLENEKKNFQLIRSAVRDLGGIPAMINHSDMSNTIPDEKVVITYLSFLCARLLDLRKEIRAARLIQTTWRKYKLKTDLKRHQERDKAARIIQSAVINFLAKQRLRKRVNAALIIQKYWRRVLAQRKLLILKKEKLEKVQNKAASLIQGYWRRYSTRKRFLKLKYYSIILQSRIRMIIAVTSYKRYLWATVTIQRHWRAYLRRKQDQQRYEMLKSSSLIIQSMFRKWKRRKMQSQVKATVILQRAFREWHLRKRAKEENSAIVIQSWYRMHKELRKYIYIRSCVIVIQKRFRCFQAQKLYKRKKESILTIQKYYKAYLKGKIERTNYLQKRAAAIQLQAAFRRLKAHNLCRQIRAACVIQSYWRMRQDRVRFLNLKKTIIKLQAHIRKHQQVQKYKKMKKAAVIIQTHFRAYIFTRKVLASYQKTRSAVIVLQSAYRGMQARKVYIHILTSVIKIQSYYRAYVSKKEFLSLKNTTIKLQSIVKMKQTRKQYLHLRAAALFIQQCYRSKKITTQKREEYMQMRESCIKLQAFVRGYLVRKQMRLQRKAVISLQSYFRMRKARQYYLKMCKAIIVIQNYYHAYKAQVNQRKNFLRVKKAATCLQAAYRGYKVRQLIKQQSIAALKIQSAFRGYNKRVKYQSVLQSIIKIQRWYRAYKTLHDTRTRFLKTKAAVVSLQSAYRGWKVRKQIRREHQAALKIQSAFRMAKAQKQFRLFKTAALVIQQNFRAWTAGRKQRMEYIELRHAVLILQSMWKGKTLRRQLQRQXKCAIIIQSYYRMHVQQKKWKIMKKAALLIQKYYKAYSIGREQHHLYLKTKAAVVTLQSAYRGMKVRKRIKDCNKAAVTIQSKYRAYKTKKKYATYRASAIIIQRWYRGIKITHXXHQEYLNLKKTAIKIQSVYRGIRVRRHIQHMHRAATFIKAMFKMHQSRISYHTMRKAAIVIQVRFRAYYQGKMHREKYLTILKAVKILQASFRGVXVRWTLRKMQIAATLIQSNYRRYKQQTYFNKLKKITKTIQQRYRAVKERNIQFKRYNKLRHSVIYIQAIFRGKKARRHLKMMHVAATLIQRRFRTLMMRRRFLSLKKTAVWIQRKYRAHLCTKHHLQFLQVQNAVIKIQSSYRRWMIRKKMREMHRAATFIQATFRMHRVHMRYQALKQASVVIQQQYXANRAAKLQRQHYLRQRRSAVILQAAFRGVKTRRHLKSMHSSATLIQSRFRSLLVRRRFISLKKATIFVQRKYRATICAKHKLHQFLQLRKAAITIQSSYRRLMVKKKLQEMQRAAVLIQATFRMHRTCVTFQTWKQASILIQQHYRTYRAAKLQKENYIRQWHSAVVIQTAYKGMKARQHLREKHKAAIIIQSTYRMYRQYCFYQKLQWATKIIQEKYRANKKKQKALQHNELKKETCVQASFQDMNIQKQIQEQHQAAIIIQKHCKAFKIRKHYLHLRATVVSIQRRYRKLTAVRTQAVICIQSYYRGFKVRRDIQNMHRAATLIQSFYRMHRAKVDYQTKKTAIVVIQNYYRLYVRVKTERKSFLPVQKSVRTIQAAFRGMKVRQKLKIVSEEKMAAIVNQSALCCYRSKTQYEAVQSEGVMIQEWYKASDLACSQEAECHSQSRAAVTIQNAFRRMVTRKLETQKCAALRIQFFLQMAVYRRRFVQQKRAAITLQHYFRTWQTRKQFLLYRKAAVVLQNHYRAFLSAKHQRQVYLQIRSSVIIIQARSKGFIQKRKFQEIKNSTIKIQAMWRRYRAKKYLCKVKAACKIQAWYRCWRAHKEYLAILKAVKIIQGCFYTKLERTWFLNVRASAIIIQRKWRAILSAKIAHEHFLMIKRHRAACLIQAHYRGYKERQVFLRQKSAALIIQKYIRAREAGKRERIKYIEFKKSTVILQALVRGWLVRKRILEQKTKIRLLHFTAAAYYHLNALRIQRAYKLYLAVKNANKQVNSVICIQRWFRARLQQKKFIQKYSIKKIEHEGQECLSQQNRAASVIQKAVRHFVLRKKQEKFTSGIIKIQALWRGYSWRKKNDCTKIKAIRLSLQVVNREIREENKLYKRTALALHYLLTYKHLSAILEALKHLEVVTRLSPLCCENMAQSGAISKIFVLIRSCNRSVPCMEVIRYAVQVLLNVSKYEKTTSAVYDVENCIDTLLELLQIYREKPGNKVADKGGSIFTKTCCLLAVLLKTTNRASDVRSRSKVVDRIYSLYKLTAHKHKMNTERILHKQKKNSSISIPFIPXTPVRTRIVSRLKPDWVLRRDNMEEITNPLQAIQMVMDTLGIPY.

The tract at residues 1–34 (MANRRVGRGCWEVSPTERRPPAGLRGPATEEEAS) is disordered. Phosphoserine occurs at positions 280, 283, 367, 392, 425, and 605. Residues 920–1056 (KASKEILLAF…LLWKIAFAFQ (137 aa)) form the Calponin-homology (CH) 1 domain. The stretch at 1057–1078 (VDISLNLDQLKEEIAFLKHTKS) forms a coiled coil. Residue serine 1103 is modified to Phosphoserine. The Calponin-homology (CH) 2 domain maps to 1110-1261 (SENIKLLMDW…YLSFLCARLL (152 aa)). 38 IQ domains span residues 1347-1378 (QNKA…IILQ), 1393-1422 (YLWA…MLKS), 1582-1613 (LKKT…VIIQ), 1605-1634 (MKKA…KTRS), 1632-1661 (TRSA…SVIK), 1655-1684 (ILTS…TTIK), 1728-1757 (MRES…AVIS), 1751-1782 (QRKA…IVIQ), 1801-1830 (VKKA…AALK), 1824-1853 (QSIA…SIIK), 1874-1903 (TKAA…AALK), 1897-1928 (EHQA…LVIQ), 1947-1978 (LRHA…IIIQ), 1970-2001 (QXKC…LLIQ), 2020-2049 (TKAA…AAVT), 2043-2074 (CNKA…IIIQ), 2093-2124 (LKKT…TFIK), 2116-2147 (MHRA…IVIQ), 2239-2270 (LRHS…TLIQ), 2262-2293 (MHVA…VWIQ), 2311-2342 (VQNA…TFIQ), 2334-2365 (MHRA…VVIQ), 2384-2415 (QRRS…TLIQ), 2407-2438 (MHSS…IFVQ), 2457-2488 (LRKA…VLIQ), 2530-2561 (QWHS…IIIQ), 2624-2653 (QHQA…TVVS), 2665-2696 (RTQA…TLIQ), 2688-2719 (MHRA…VVIQ), 2738-2767 (VQKS…EKMA), 2814-2845 (QSRA…RIQF), 2859-2890 (QKRA…VVLQ), 2909-2938 (IRSS…STIK), 2932-2963 (IKNS…KIQA), 2954-2985 (KVKA…KIIQ), 3029-3060 (RHRA…LIIQ), 3079-3110 (FKKS…RLLH), and 3203-3234 (FTSG…IRLS).

The protein resides in the cytoplasm. It is found in the cytoskeleton. It localises to the spindle. Its subcellular location is the nucleus. In terms of biological role, probable role in mitotic spindle regulation and coordination of mitotic processes. May have a preferential role in regulating neurogenesis. The polypeptide is Abnormal spindle-like microcephaly-associated protein homolog (ASPM) (Macaca fascicularis (Crab-eating macaque)).